The chain runs to 281 residues: Formamidopyrimidine-DNA glycosylase (281 aa).

The active-site Schiff-base intermediate with DNA is Pro-2. Residue Glu-3 is the Proton donor of the active site. Lys-58 acts as the Proton donor; for beta-elimination activity in catalysis. Positions 94, 113, and 156 each coordinate DNA. The segment at 241 to 281 (AVYDRVGQPCPGCDCDVARTGGIERMVQSGRSTFFCGRRQR) adopts an FPG-type; degenerate zinc-finger fold. The active-site Proton donor; for delta-elimination activity is Arg-271.

The protein belongs to the FPG family. In terms of assembly, monomer. Zn(2+) serves as cofactor.

The catalysed reaction is Hydrolysis of DNA containing ring-opened 7-methylguanine residues, releasing 2,6-diamino-4-hydroxy-5-(N-methyl)formamidopyrimidine.. It carries out the reaction 2'-deoxyribonucleotide-(2'-deoxyribose 5'-phosphate)-2'-deoxyribonucleotide-DNA = a 3'-end 2'-deoxyribonucleotide-(2,3-dehydro-2,3-deoxyribose 5'-phosphate)-DNA + a 5'-end 5'-phospho-2'-deoxyribonucleoside-DNA + H(+). Functionally, involved in base excision repair of DNA damaged by oxidation or by mutagenic agents. Acts as a DNA glycosylase that recognizes and removes damaged bases. Has a preference for oxidized purines, such as 7,8-dihydro-8-oxoguanine (8-oxoG). Has AP (apurinic/apyrimidinic) lyase activity and introduces nicks in the DNA strand. Cleaves the DNA backbone by beta-delta elimination to generate a single-strand break at the site of the removed base with both 3'- and 5'-phosphates. The chain is Formamidopyrimidine-DNA glycosylase from Rhodospirillum rubrum (strain ATCC 11170 / ATH 1.1.1 / DSM 467 / LMG 4362 / NCIMB 8255 / S1).